Consider the following 409-residue polypeptide: Chaetoglobosin A biosynthesis cluster protein C (409 aa).

Residues 51-120 form the HTH CENPB-type domain; it reads DLPANSRKLT…VKRQPQLRTR (70 aa). The segment at residues 84–113 is a DNA-binding region (H-T-H motif); sequence RGVEDMANHLLRERDAPPVGKLWAHNFVKR. Disordered stretches follow at residues 243–269 and 320–350; these read PTHP…ETRS and ANEP…QDPL. Residues 255 to 269 show a composition bias toward polar residues; it reads PWASKTPYNAQETRS.

The protein localises to the nucleus. In terms of biological role, part of the gene cluster that mediates the biosynthesis of chaetoglobosin A which has a unique inhibitory activity against actin polymerization in mammalian cells. Chaetoglobosin A and its intermediates are involved in the morphological differentiation of C.globosum. The first step of the pathway is the synthesis of prochaetoglobosin I via condensation of one acetyl-CoA, 8 malonyl-CoA, and a L-tryptophan molecule by the PKS-NRPS hybrid synthetase cheA, followed by reduction of backbone double bond to install desired geometry by the enoyl reductase cheB. Further multiple oxidation steps performed by the cytochrome P450 monooxygenases cheE and cheG, as well as by the FAD-linked oxidoreductase cheF, lead to the formation of chaetoglobosin A. Depending on the order of action of these reductases, distinct intermediates can be identified. Within the pathway, the cytochrome P450 monooxygenase cheE catalyzes a stereospecific epoxidation on prochaetoglobosin I, cytoglobosin D, and chaetoglobosin J intermediates. The FAD-linked oxidoreductase cheF performs dehydrogenation of the C-20 hydroxyl groups in the 20-dihyrochaetoglobosin A and cytoglobosin D intermediates. Finally, the cytochrome P450 monooxygenase cheG can catalyze the stereospecific dihydroxylation of prochaetoglobosin I and prochaetoglobosin IV at C-19 and C-20, respectively. The Diels-Alderase cheD may play a role in the post-PKS-NRPS biosynthetic steps catalyzing Diels-Alder cyclization. The chain is Chaetoglobosin A biosynthesis cluster protein C from Chaetomium globosum (strain ATCC 6205 / CBS 148.51 / DSM 1962 / NBRC 6347 / NRRL 1970) (Soil fungus).